The following is a 152-amino-acid chain: Transcriptional regulator MraZ (152 aa).

SpoVT-AbrB domains are found at residues 5–52 (HSNR…PMPE) and 81–124 (ATEV…DQGR).

Belongs to the MraZ family. Forms oligomers.

Its subcellular location is the cytoplasm. The protein resides in the nucleoid. This chain is Transcriptional regulator MraZ, found in Solidesulfovibrio magneticus (strain ATCC 700980 / DSM 13731 / RS-1) (Desulfovibrio magneticus).